We begin with the raw amino-acid sequence, 106 residues long: Valine dehydrogenase (106 aa).

Lysine 91 is a catalytic residue.

Belongs to the Glu/Leu/Phe/Val dehydrogenases family. As to quaternary structure, homodimer.

The protein resides in the cytoplasm. The catalysed reaction is L-valine + NAD(+) + H2O = 3-methyl-2-oxobutanoate + NH4(+) + NADH + H(+). It functions in the pathway amino-acid degradation; L-valine degradation. Oxidative deamination of branched-chain amino acids. The catabolism of valine is the major source of fatty acid precursors for macrolide biosynthesis and a vital source of antibiotic precursors. This chain is Valine dehydrogenase (vdh), found in Streptomyces ambofaciens.